The sequence spans 476 residues: Bifunctional protein HldE (476 aa).

The ribokinase stretch occupies residues 1-319 (MKVSLPAFEK…EALALHHGES (319 aa)). 195–198 (NMSE) lines the ATP pocket. The active site involves Asp-264. Residues 345 to 476 (MTNGCFDILH…AIIQNIMANQ (132 aa)) are cytidylyltransferase.

This sequence in the N-terminal section; belongs to the carbohydrate kinase PfkB family. The protein in the C-terminal section; belongs to the cytidylyltransferase family. As to quaternary structure, homodimer.

It carries out the reaction D-glycero-beta-D-manno-heptose 7-phosphate + ATP = D-glycero-beta-D-manno-heptose 1,7-bisphosphate + ADP + H(+). It catalyses the reaction D-glycero-beta-D-manno-heptose 1-phosphate + ATP + H(+) = ADP-D-glycero-beta-D-manno-heptose + diphosphate. It participates in nucleotide-sugar biosynthesis; ADP-L-glycero-beta-D-manno-heptose biosynthesis; ADP-L-glycero-beta-D-manno-heptose from D-glycero-beta-D-manno-heptose 7-phosphate: step 1/4. It functions in the pathway nucleotide-sugar biosynthesis; ADP-L-glycero-beta-D-manno-heptose biosynthesis; ADP-L-glycero-beta-D-manno-heptose from D-glycero-beta-D-manno-heptose 7-phosphate: step 3/4. Its function is as follows. Catalyzes the phosphorylation of D-glycero-D-manno-heptose 7-phosphate at the C-1 position to selectively form D-glycero-beta-D-manno-heptose-1,7-bisphosphate. Catalyzes the ADP transfer from ATP to D-glycero-beta-D-manno-heptose 1-phosphate, yielding ADP-D-glycero-beta-D-manno-heptose. The protein is Bifunctional protein HldE of Shewanella baltica (strain OS195).